A 397-amino-acid polypeptide reads, in one-letter code: Lysophospholipid transporter LplT (397 aa).

The Periplasmic portion of the chain corresponds to 1–17 (MSESVHTNTSLWSKGMK). A helical membrane pass occupies residues 18–38 (AVIVAQFLSAFGDNALLFATL). Residues 39–52 (ALLKAQFYPEWSQP) lie on the Cytoplasmic side of the membrane. Residues 53 to 73 (ILQMVFVGAYILFAPFVGQVA) traverse the membrane as a helical segment. The Periplasmic segment spans residues 74–90 (DSFAKGRVMMFANGLKL). The chain crosses the membrane as a helical span at residues 91–111 (LGAASICFGINPFLGYTLVGV). The Cytoplasmic portion of the chain corresponds to 112–144 (GAAAYSPAKYGILGELTTGSKLVKANGLMEAST). A helical transmembrane segment spans residues 145–165 (IAAILLGSVAGGVLADWHVLV). Residue Ala166 is a topological domain, periplasmic. The helical transmembrane segment at 167–187 (LAACALAYGGAVVANIYIPKL) threads the bilayer. Topologically, residues 188 to 226 (AAARPGQSWNLINMTRSFLNACTSLWRNGETRFSLVGTS) are cytoplasmic. A helical transmembrane segment spans residues 227–247 (LFWGAGVTLRFLLVLWVPVAL). Residues 248–256 (GITDNATPT) lie on the Periplasmic side of the membrane. Residues 257-277 (YLNAMVAIGIVVGAGAAAKLV) form a helical membrane-spanning segment. At 278–280 (TLE) the chain is on the cytoplasmic side. Residues 281–301 (TVSRCMPAGILIGVVVLIFSL) traverse the membrane as a helical segment. At 302–304 (QHE) the chain is on the periplasmic side. A helical membrane pass occupies residues 305-325 (LLPAYALLMLIGVLGGFFVVP). The Cytoplasmic segment spans residues 326–343 (LNALLQERGKKSVGAGNA). A helical transmembrane segment spans residues 344–364 (IAVQNLGENSAMLLMLGIYSL). Over 365–366 (AV) the chain is Periplasmic. A helical transmembrane segment spans residues 367–387 (MVGIPVVPIGIGFGTLFALAI). Residues 388-397 (TALWIWQRRH) lie on the Cytoplasmic side of the membrane.

The protein belongs to the major facilitator superfamily. LplT (TC 2.A.1.42) family.

The protein localises to the cell inner membrane. In terms of biological role, catalyzes the facilitated diffusion of 2-acyl-glycero-3-phosphoethanolamine (2-acyl-GPE) into the cell. This Escherichia coli O9:H4 (strain HS) protein is Lysophospholipid transporter LplT.